Reading from the N-terminus, the 2192-residue chain is MSNVLLLGDQTADQSPLLRKLVLRRNDALVTTFHEQVSVALRDEVSKLPARQRQDIPSFLKLNTLVDLYYQGDKRLPILESTFVALTQLGHYIGYFSENPDRLPYAANTRVLGLCTGSLAATVIVSAKSLSELVSLAVEAVRIAFRAGACVDAAKRVLQQPGEEKEPWSTIVMNLSEKDAQKALDEFHSSTGTSGPSRAYISAISTMAVTISGPPSTTQKLFSESADLSTKNRVSIPIYAPYHAAHLHSERDLQRIIPDSSRALLKKYQPHTLLHSSATGECLVADNTCDLMSLALVDFLREPVRWDRLLEESISQIIATPKAPAKIFTIGVSNVANSMAAALKASGQATVSITDHTSWIVPDDYNSTRGRTQNDKIAIVGMSGRFPSAASVDALWELLEKGLDVHRKIPADRFDADAHCDPSGKSKNKSHTPYGCFIDEPGLFDPRFFNMSPREAAQTDPMGRLALVTAYEALEESGYVPNRTPSTKLHRIGTFYGQTSDDWREINAAENVDTYFITGGVRAFAPGRINYYFKFSGPSFSIDTACSSSLAAIQLACTSLWAGDCDTACAGGLNVLTNPDIFSGLSKGQFLSKTGSCKTYDNDADGYCRGDGCGSVILKRYEDAIADKDNILGCILGAATNHSAEAVSITHPHAGNQEFLFKKVLAEAGVDAHEISYVEMHGTGTQAGDGIEMTSVTNAFAPPNRRRTPDEKLFLGAIKANVGHGEAASGINSLAKVLMMFKKNAIPANVGIKGVMNESFPKDLGERNVHIPLKQVEFPRNGDAPRKIFLNNFSAAGGNTSLLLEDGPVRKPSTVKDPRSTLPITVTARSIASLKRNIDNLKSYLSKTPEASLTSLSYTSTARRIQHNYRIAFPATDINKVSEALDAQIKDSYSPVAITATRVAFCFTGQGSQYTGLGQKLYQDLPSFKADIDQLNQLAESHNLPSFLELFDGTDVATLSPVKVQLGTACIQVALSRMWESWGIKPSAVIGHSLGEYAALHVAGVISASDMVYLVGRRAELLVKDCTPHTHGMLAVKASVDAIRNALGSKMTEVACINGPEETVLCGSSEIVTAANEVLTSKGMKSTKLNVPFAFHSAQVDPILESFRTTASSVSFKKPAVPVLSPLSGDIITDVGVIGPEYLAKHARETVNFSQALESGQKAKIFDGKTAWLEIGAHPVCLGMVKGSVETTATAPSLRRGEDAWKTLANSMCALFLAGVYINFDEYHRAFNDAQELLHLPTYSFDDKKYWLDYHNNWTLTKGEAPQPTKAIEAAPFEAAAPVERTYKKLSDSCQKIIDEEFSANAGRVLVQSDVCQPNLRRVAMGHQVNDTALCPSSLYFDMAMTVADYIYKALRPSAPKIGYNVAHMEVPKPFIIKNVAPPEGQHLQLEAHADLEEGVAKLVFRSVTPNGKQLVVHAHCTVKFEDINTWQEGWENISFMVKSQIENLQRKTRTQEAHVIGRGLAYKLFKVFVNYAKPYRGMEEIILDNQTTEATASVHFQTKPEDGEFFFPAYWCDSMAHLGGFIVNATDLCDSDNYVSVSHGWGSIKVAKEMSANKKYRNYVRMVEKPGNVTQGDVYIFDGDEIIAVVGALKFQKIPRKVLNTFLPPQKAGSAVSAPVAPPAAARPALKQAPRINTQAQPAKAVPKQVTVAAPTPKAAPKKADLKKPAGPTIITRVMHIIAAETDVDSSELVDQAAFENLGVDSLMSLTISARFREELDMDISSTLFTDFPTVGEMKKFFSQYDGEVGTPEQDDSDSDSETSGDASTPMSEVGTPMTIPSSAVSESGKFDLDTAAPASGEVSIARQIVATEMGVEIAEVTDQADLADMGMDSLMSLTILSELREKTGIDLPSTFLMTNPTIEDVENALDMRPKARVAPVAVPAPSNRRPSSPQLDKVNEKLNASRSADISKYPAATSVLLQGNPKIATKKIFFLPDGSGSATSYVSIPNIGSDVCAFGLNCPFMKSPEQWSCGIEICAMVYLKEIKRRKPTGPYIIGGWSAGGVIAYAVAQALLANNEEVEKLLLLDSPCPVNLDPLPARLHIFFNEIGLLGTGDPSKTPKWLLPHFSAAIRSLSDYQPQPTIKPVKTYAIWCREGVAGNPGDPRPPPAEDEDPAPMKWLLNHRTDFTDNGWGKLCGVENMKYGVMGGHHFSMMKPPHVSIFDYSIVDDEANMRQAEDLGQLIKEGLSM.

An N-terminal acylcarrier protein transacylase domain (SAT) region spans residues 5–243; it reads LLLGDQTADQ…VSIPIYAPYH (239 aa). In terms of domain architecture, Ketosynthase family 3 (KS3) spans 374–806; the sequence is NDKIAIVGMS…GGNTSLLLED (433 aa). Residues C546, H681, and H724 each act as for beta-ketoacyl synthase activity in the active site. The interval 905 to 1218 is malonyl-CoA:ACP transacylase (MAT) domain; the sequence is FCFTGQGSQY…ANSMCALFLA (314 aa). The active-site For acyl/malonyl transferase activity is the S993. A product template (PT) domain region spans residues 1293 to 1610; sequence SCQKIIDEEF…RKVLNTFLPP (318 aa). Residues 1295 to 1430 are N-terminal hotdog fold; that stretch reads QKIIDEEFSA…CTVKFEDINT (136 aa). The region spanning 1295-1605 is the PKS/mFAS DH domain; it reads QKIIDEEFSA…FQKIPRKVLN (311 aa). Residue H1327 is the Proton acceptor; for dehydratase activity of the active site. Residues 1458-1605 are C-terminal hotdog fold; it reads AHVIGRGLAY…FQKIPRKVLN (148 aa). D1518 serves as the catalytic Proton donor; for dehydratase activity. Positions 1639–1668 are disordered; it reads TQAQPAKAVPKQVTVAAPTPKAAPKKADLK. Positions 1670 to 1747 constitute a Carrier 1 domain; the sequence is PAGPTIITRV…EMKKFFSQYD (78 aa). S1707 is modified (O-(pantetheine 4'-phosphoryl)serine). The segment at 1748 to 1788 is disordered; the sequence is GEVGTPEQDDSDSDSETSGDASTPMSEVGTPMTIPSSAVSE. Over residues 1754-1764 the composition is skewed to acidic residues; it reads EQDDSDSDSET. Residues 1798 to 1875 form the Carrier 2 domain; it reads APASGEVSIA…DVENALDMRP (78 aa). Position 1835 is an O-(pantetheine 4'-phosphoryl)serine (S1835). Residues 1913–2164 are thioesterase (TE) domain; sequence SKYPAATSVL…SMMKPPHVSI (252 aa).

Its function is as follows. Non-reducing polyketide synthase; part of the gene cluster that mediates the biosynthesis of elsinochromes, pigments consisting of at least four interconvertible tautomers (A, B, C and D) that have a core phenolic quinone to which various side chains are attached and which play an important role in fungal pathogenesis. The non-reducing polyketide synthase PKS1 was proposed to iteratively catalyze decarboxylation between acetyl-CoA and malonyl-CoA subunits for polyketide chain elongation. The released polyketide undergoes cyclization to form an aromatic ring, and proceeds via serial modification steps to produce the heptaketide back- bone of elsinochrome. As elsinochrome has a symmetrical structure, two identical heptaketides are fused to form a core 1,2-dihydrobenzo-perylene ring structure, which can then be successively modified to produce the various derivatives of elsinochrome. Some of these reactions may be cooperatively carried out, at least in part, by the products of RDT1, OXR1 and PKS1. PRF1, embedded within the elsinochrome cluster possibly functions to stabilize some of the biosynthetic enzymes required for elsinochrome production. As prefoldin is a hexamer containing 2 a and 4 b subunits, additional prefoldin subunits, whose coding genes may not immediately link to the elsinochrome biosynthetic gene cluster, are required to fulfill the chaperone function. In addition, no methyltransferase-coding gene exists within the biosynthetic gene cluster, even though elsinochrome has four methyl groups at positions C3, C7, C8 and C12. Apparently, the identified gene cluster does not contain the entire entourage of genes responsible for elsinochrome biosynthesis. Once elsinochrome is synthesized, it must be exported outside the fungal cells, which is probably accomplished by the ECT1 transporter, to avoid toxicity. In Elsinoe fawcettii (Citrus scab fungus), this protein is Non-reducing polyketide synthase 1.